The following is a 942-amino-acid chain: Mitogen-activated protein kinase kinase kinase A (942 aa).

Residues 15–96 enclose the PB1 domain; that stretch reads FIRIKCILGD…NPTKIISTKF (82 aa). The segment at 107-144 is disordered; the sequence is PLSSSLSPTQSLILNNNNNNNNNNNNNNNNNNNNNNNN. One can recognise a Protein kinase domain in the interval 170–429; it reads WQKGQILGRG…ANQLLKHPFI (260 aa). ATP is bound by residues 176–184 and Lys-199; that span reads LGRGGYGSV. The Proton acceptor role is filled by Asp-297. Low complexity predominate over residues 441–486; it reads ISPTTTLSTNTTNTTATTTTTNNATNSNINQQQQQQQQQPPTRTQR. A disordered region spans residues 441-512; it reads ISPTTTLSTN…ISTSTSSSSS (72 aa). Residues 487–498 show a composition bias toward polar residues; that stretch reads VSISAGSSNNKR. Low complexity predominate over residues 500-512; sequence TPPISTSTSSSSS. The helical transmembrane segment at 513–533 threads the bilayer; sequence SILNNFSINIILPINLIILIF. Residues 518-564 enclose the F-box domain; that stretch reads FSINIILPINLIILIFREIKPNFVNTLSRVCKHWKQIIDDDELWNKY. WD repeat units lie at residues 607-646, 690-733, 736-778, 780-825, 828-865, 872-909, and 912-942; these read GHDKGVFCVKLIDDQGMVLSGGEDKKLKVWDISGNHHHNH, GHSG…TLFT, NHQE…STLR, HTGG…KVRS, QHTEDVLCCYVFDQKVVTGSCDGTIKLWDIGTGKTIST, RQKNYVWTVQFDQSKIISSGKTGIIRIWDIYNERDSRS, and GHHETIFSLQFNNQKLITGSLDKLVKIWSID.

This sequence belongs to the protein kinase superfamily. STE Ser/Thr protein kinase family. MAP kinase kinase kinase subfamily. As to quaternary structure, interacts with ubcB and ubpB. Mg(2+) is required as a cofactor. In terms of processing, ubcB and ubpB differentially control ubiquitination/deubiquitination and degradation in a cell-type-specific and temporally regulated manner.

The protein resides in the membrane. The enzyme catalyses L-seryl-[protein] + ATP = O-phospho-L-seryl-[protein] + ADP + H(+). The catalysed reaction is L-threonyl-[protein] + ATP = O-phospho-L-threonyl-[protein] + ADP + H(+). Its function is as follows. Regulates cell-type differentiation and spatial patterning, required for the proper induction and maintenance of prespore cell differentiation. This Dictyostelium discoideum (Social amoeba) protein is Mitogen-activated protein kinase kinase kinase A.